The chain runs to 107 residues: uncharacterized protein (107 aa).

The helical transmembrane segment at 9-31 threads the bilayer; the sequence is AAAIITAPTILAMMSTVLRALIF.

The protein localises to the membrane. This is an uncharacterized protein from Archaeoglobus fulgidus (strain ATCC 49558 / DSM 4304 / JCM 9628 / NBRC 100126 / VC-16).